The sequence spans 198 residues: Acireductone dioxygenase (198 aa).

Positions 97, 99, 103, and 141 each coordinate Fe(2+). His97, His99, Glu103, and His141 together coordinate Ni(2+).

Belongs to the acireductone dioxygenase (ARD) family. In terms of assembly, monomer. The cofactor is Fe(2+). Requires Ni(2+) as cofactor.

The catalysed reaction is 1,2-dihydroxy-5-(methylsulfanyl)pent-1-en-3-one + O2 = 3-(methylsulfanyl)propanoate + CO + formate + 2 H(+). It carries out the reaction 1,2-dihydroxy-5-(methylsulfanyl)pent-1-en-3-one + O2 = 4-methylsulfanyl-2-oxobutanoate + formate + 2 H(+). It functions in the pathway amino-acid biosynthesis; L-methionine biosynthesis via salvage pathway; L-methionine from S-methyl-5-thio-alpha-D-ribose 1-phosphate: step 5/6. Functionally, catalyzes 2 different reactions between oxygen and the acireductone 1,2-dihydroxy-3-keto-5-methylthiopentene (DHK-MTPene) depending upon the metal bound in the active site. Fe-containing acireductone dioxygenase (Fe-ARD) produces formate and 2-keto-4-methylthiobutyrate (KMTB), the alpha-ketoacid precursor of methionine in the methionine recycle pathway. Ni-containing acireductone dioxygenase (Ni-ARD) produces methylthiopropionate, carbon monoxide and formate, and does not lie on the methionine recycle pathway. The protein is Acireductone dioxygenase of Synechococcus elongatus (strain ATCC 33912 / PCC 7942 / FACHB-805) (Anacystis nidulans R2).